A 261-amino-acid polypeptide reads, in one-letter code: Polyamine aminopropyltransferase (261 aa).

A PABS domain is found at 1–219 (MHPFRRRVRP…AVMAFRQSPS (219 aa)). S-methyl-5'-thioadenosine contacts are provided by residues Asp-96 and 124–125 (DG). The active-site Proton acceptor is the Asp-142.

It belongs to the spermidine/spermine synthase family. Homodimer or homotetramer.

It is found in the cytoplasm. It carries out the reaction S-adenosyl 3-(methylsulfanyl)propylamine + putrescine = S-methyl-5'-thioadenosine + spermidine + H(+). It participates in amine and polyamine biosynthesis; spermidine biosynthesis; spermidine from putrescine: step 1/1. In terms of biological role, catalyzes the irreversible transfer of a propylamine group from the amino donor S-adenosylmethioninamine (decarboxy-AdoMet) to putrescine (1,4-diaminobutane) to yield spermidine. The polypeptide is Polyamine aminopropyltransferase (Chromobacterium violaceum (strain ATCC 12472 / DSM 30191 / JCM 1249 / CCUG 213 / NBRC 12614 / NCIMB 9131 / NCTC 9757 / MK)).